The chain runs to 492 residues: G2/mitotic-specific cyclin CYB1 (492 aa).

Positions 1–176 (MPQVTKTNNE…QPEVGERSQS (176 aa)) are disordered. The span at 23-33 (QESISTIKNTT) shows a compositional bias: polar residues. Over residues 34–58 (ISNSQHKQQTQQQISSPPQVSVTSS) the composition is skewed to low complexity. Residues 59–83 (EGVSHVNTRQYLGDVSNQYITNAKP) are compositionally biased toward polar residues. Positions 111-135 (ASDNNNNGSTSSSSNSSNNNNNDAN) are enriched in low complexity.

It belongs to the cyclin family. Cyclin AB subfamily.

Functionally, essential for the control of the cell cycle at the G2/M (mitosis) transition. Interacts with the CDC2 protein kinase to form MPF. G2/M cyclins accumulate steadily during G2 and are abruptly destroyed at mitosis. This Candida albicans (Yeast) protein is G2/mitotic-specific cyclin CYB1 (CYB1).